The primary structure comprises 73 residues: Beta-defensin 10 (73 aa).

Positions 1-23 (MRTLCSLLLICCLLFSYTTPAVG) are cleaved as a signal peptide. 3 disulfides stabilise this stretch: cysteine 37–cysteine 66, cysteine 44–cysteine 59, and cysteine 49–cysteine 67.

Belongs to the beta-defensin family. As to expression, expressed in both adult and neonate brain, and very weakly in kidneys, epididymis, and testis.

The protein localises to the secreted. Has antibacterial activity. The protein is Beta-defensin 10 (Defb10) of Mus musculus (Mouse).